The sequence spans 154 residues: Myoglobin (154 aa).

The Globin domain maps to 2–148 (GLSDGEWQLV…FRKDMASNYK (147 aa)). Phosphoserine is present on Ser-4. His-65 is a nitrite binding site. Residue His-65 participates in O2 binding. The residue at position 68 (Thr-68) is a Phosphothreonine. Residue His-94 participates in heme b binding.

This sequence belongs to the globin family. In terms of assembly, monomeric.

Its subcellular location is the cytoplasm. It is found in the sarcoplasm. It catalyses the reaction Fe(III)-heme b-[protein] + nitric oxide + H2O = Fe(II)-heme b-[protein] + nitrite + 2 H(+). The enzyme catalyses H2O2 + AH2 = A + 2 H2O. Monomeric heme protein which primary function is to store oxygen and facilitate its diffusion within muscle tissues. Reversibly binds oxygen through a pentacoordinated heme iron and enables its timely and efficient release as needed during periods of heightened demand. Depending on the oxidative conditions of tissues and cells, and in addition to its ability to bind oxygen, it also has a nitrite reductase activity whereby it regulates the production of bioactive nitric oxide. Under stress conditions, like hypoxia and anoxia, it also protects cells against reactive oxygen species thanks to its pseudoperoxidase activity. The sequence is that of Myoglobin (MB) from Pan troglodytes (Chimpanzee).